The chain runs to 342 residues: MRVLLFLLLSLFMLPAFSADNLLRWHDAQHFTVQASTPLKAKRAWKLCALYPSLKDSYWLSLNYGMQEAARRYGVDLKVLEAGGYSQLATQQAQIDQCKQWGAEAILLGSSTTSFPDLQKQVASLPVIELVNAIDAPQVKSRVGVPWFQMGYQPGRYLVQWAHGKPLNVLLMPGPDNAGGSKEMVEGFRAAIAGSPVRIVDIALGDNDIEIQRNLLQEMLERHPEIDVVAGTAIAAEAAMGEGRNLKTPLTVVSFYLSHQVYRGLKRGRVIMAASDQMVWQGELAVEQAIRQLQGQSVSDNVSPPILVLTPKNADREHIRRSLSPGGFRPVYFYQHTSAAKK.

Positions M1–S18 are cleaved as a signal peptide.

This sequence belongs to the bacterial solute-binding protein 2 family.

Its subcellular location is the periplasm. Its function is as follows. Upon binding a putative inducer it probably interacts with TorS and allows it to play a role in the induction of the torCAD operon for trimethylamine N-oxide reductase. This is Periplasmic protein TorT (torT) from Escherichia coli (strain K12).